The primary structure comprises 650 residues: Chaperone protein DnaK (650 aa).

The residue at position 200 (Thr200) is a Phosphothreonine; by autocatalysis. Residues 613-634 form a disordered region; that stretch reads QAGAAGAAGAAEGAAHAGGAQQ.

Belongs to the heat shock protein 70 family.

Functionally, acts as a chaperone. This Burkholderia vietnamiensis (strain G4 / LMG 22486) (Burkholderia cepacia (strain R1808)) protein is Chaperone protein DnaK.